A 907-amino-acid polypeptide reads, in one-letter code: NADH-quinone oxidoreductase subunit G (907 aa).

The 83-residue stretch at 1 to 83 (MTIIFVDNEE…GMIVSTSDKI (83 aa)) folds into the 2Fe-2S ferredoxin-type domain. Positions 34, 45, 48, and 67 each coordinate [2Fe-2S] cluster. The 4Fe-4S His(Cys)3-ligated-type domain maps to 83-122 (ISRNFRKGIIELLMLNHPHDCPICEEGGSCHLQDMTVMAG). His-99, Cys-103, Cys-106, Cys-112, Cys-151, Cys-154, Cys-157, Cys-201, Cys-228, Cys-231, Cys-235, and Cys-263 together coordinate [4Fe-4S] cluster. The 57-residue stretch at 221–277 (MQYAPSICQHCCVGCNISVGEKYGKISRIENRYHNAINHYFLCDLGRFSYDYSNVDE) folds into the 4Fe-4S Mo/W bis-MGD-type domain.

It belongs to the complex I 75 kDa subunit family. Composed of 13 different subunits. Subunits NuoCD, E, F, and G constitute the peripheral sector of the complex. [2Fe-2S] cluster is required as a cofactor. It depends on [4Fe-4S] cluster as a cofactor.

It carries out the reaction a quinone + NADH + 5 H(+)(in) = a quinol + NAD(+) + 4 H(+)(out). NDH-1 shuttles electrons from NADH, via FMN and iron-sulfur (Fe-S) centers, to quinones in the respiratory chain. Couples the redox reaction to proton translocation (for every two electrons transferred, four hydrogen ions are translocated across the cytoplasmic membrane), and thus conserves the redox energy in a proton gradient. The chain is NADH-quinone oxidoreductase subunit G (nuoG) from Buchnera aphidicola subsp. Baizongia pistaciae (strain Bp).